Here is a 306-residue protein sequence, read N- to C-terminus: Pantothenate kinase (306 aa).

91-98 serves as a coordination point for ATP; sequence GSVAVGKS.

Belongs to the prokaryotic pantothenate kinase family.

It localises to the cytoplasm. It carries out the reaction (R)-pantothenate + ATP = (R)-4'-phosphopantothenate + ADP + H(+). It functions in the pathway cofactor biosynthesis; coenzyme A biosynthesis; CoA from (R)-pantothenate: step 1/5. This chain is Pantothenate kinase, found in Streptococcus thermophilus (strain CNRZ 1066).